The following is a 667-amino-acid chain: MKVSDRRKFEKANFDEFESALNNKNDLVHCPSITLFESIPTEVRSFYEDEKSGLIKVVKFRTGAMDRKRSFEKIVVSVMVGKNVQKFLTFVEDEPDFQGGPIPSKYLIPKKINLMVYTLFQVHTLKFNRKDYDTLSLFYLNRGYYNELSFRVLERCYEIASARPNDSSTMRTFTDFVSGTPIVRSLQKSTIRKYGYNLAPYMFLLLHVDELSIFSAYQASLPGEKKVDTERLKRDLCPRKPTEIKYFSQICNDMMNKKDRLGDVLATAQRIRRRYNKNGSSEPRLKTLDGLTSERWIQWLGLESDYHCSFSSTRNAEDVVAGEAASSDHDQKISRVTRKRPREPKSTNDILVAGRKLFGSSFEFRDLHQLRLCHEIYMADTPSVAVQAPPGYGKTELFHLPLIALASKGDVKYVSFLFVPYTVLLANCMIRLGRRGCLNVAPVRNFIEEGCDGVTDLYVGIYDDLASTNFTDRIAAWENIVECTFRTNNVKLGYLIVDEFHNFETEVYRQSQFGGITNLDFDAFEKAIFLSGTAPEAVADAALQRIGLTGLAKKSMDINELKRSEDLSRGLSSYPTRMFNLIKEKSEVPLGHVHKIWKKVESQPEEALKLLLALFEIEPESKAIVVASTTNEVEELACSWRKYFRVVWIHGKLGCCRKGVSHKGVCH.

Residues 321–345 (AGEAASSDHDQKISRVTRKRPREPK) are disordered. Positions 375-552 (EIYMADTPSV…LQRIGLTGLA (178 aa)) constitute a Helicase ATP-binding domain. 388 to 395 (APPGYGKT) is an ATP binding site. The short motif at 498 to 501 (DEFH) is the DEAH box element.

It belongs to the helicase family. Yeast subtelomeric Y' repeat subfamily.

This is an uncharacterized protein from Saccharomyces cerevisiae (strain ATCC 204508 / S288c) (Baker's yeast).